The following is a 227-amino-acid chain: DNA repair protein RecO (227 aa).

The protein belongs to the RecO family.

Involved in DNA repair and RecF pathway recombination. The sequence is that of DNA repair protein RecO from Pseudomonas putida (strain W619).